Consider the following 129-residue polypeptide: MKKVITYGTFDLFHYGHMKLLERAKNLGDYLIVGLSTDEFNLQKQKKSHHSYEHRKFILETIDLVNEVIPEKNWEQKISDIQKHDIDTFVIGDDWKGKFDFLKEYCEVIYLPRTDGISTTQIKKDMASL.

CTP contacts are provided by residues 9–10 (TF) and 14–17 (HYGH). Position 44 (lysine 44) interacts with substrate. Lysine 46 is a CTP binding site. A substrate-binding site is contributed by lysine 77. Position 113 to 120 (113 to 120 (RTDGISTT)) interacts with CTP.

It belongs to the cytidylyltransferase family. As to quaternary structure, homodimer.

Its subcellular location is the cytoplasm. It catalyses the reaction sn-glycerol 3-phosphate + CTP + H(+) = CDP-glycerol + diphosphate. Its pathway is cell wall biogenesis; poly(ribitol phosphate) teichoic acid biosynthesis. Its function is as follows. Catalyzes the transfer of the cytidylyl group of CTP to sn-glycerol 3-phosphate so the activated glycerol 3-phosphate can be used for teichoic acid synthesis, via incorporation into both the linkage unit by TarB and TarF. The protein is Glycerol-3-phosphate cytidylyltransferase (tarD) of Bacillus spizizenii (strain ATCC 23059 / NRRL B-14472 / W23) (Bacillus subtilis subsp. spizizenii).